We begin with the raw amino-acid sequence, 287 residues long: Urease accessory protein UreD (287 aa).

This sequence belongs to the UreD family. As to quaternary structure, ureD, UreF and UreG form a complex that acts as a GTP-hydrolysis-dependent molecular chaperone, activating the urease apoprotein by helping to assemble the nickel containing metallocenter of UreC. The UreE protein probably delivers the nickel.

The protein localises to the cytoplasm. In terms of biological role, required for maturation of urease via the functional incorporation of the urease nickel metallocenter. The chain is Urease accessory protein UreD from Aliivibrio fischeri (strain MJ11) (Vibrio fischeri).